We begin with the raw amino-acid sequence, 859 residues long: Probable helicase A859L (859 aa).

Residues 178–349 (YQELRRSGRA…KNRELFGGVA (172 aa)) form the Helicase ATP-binding domain. 191-198 (MACRCGKT) lines the ATP pocket. The DEAH box signature appears at 298–301 (DECH). Residues 394–553 (QIIMALAYLK…RFYEHLLNPS (160 aa)) enclose the Helicase C-terminal domain.

The protein belongs to the asfivirus helicase A859L family.

The chain is Probable helicase A859L from Ornithodoros (relapsing fever ticks).